A 335-amino-acid chain; its full sequence is Phosphate acyltransferase (335 aa).

It belongs to the PlsX family. As to quaternary structure, homodimer. Probably interacts with PlsY.

It is found in the cytoplasm. The catalysed reaction is a fatty acyl-[ACP] + phosphate = an acyl phosphate + holo-[ACP]. The protein operates within lipid metabolism; phospholipid metabolism. Catalyzes the reversible formation of acyl-phosphate (acyl-PO(4)) from acyl-[acyl-carrier-protein] (acyl-ACP). This enzyme utilizes acyl-ACP as fatty acyl donor, but not acyl-CoA. This is Phosphate acyltransferase from Streptococcus uberis (strain ATCC BAA-854 / 0140J).